The chain runs to 692 residues: Elongation factor G (692 aa).

The tr-type G domain maps to 8 to 282 (ENTRNIGIMA…AVIDYLPSPL (275 aa)). GTP is bound by residues 17–24 (AHIDAGKT), 81–85 (DTPGH), and 135–138 (NKMD).

The protein belongs to the TRAFAC class translation factor GTPase superfamily. Classic translation factor GTPase family. EF-G/EF-2 subfamily.

It is found in the cytoplasm. Functionally, catalyzes the GTP-dependent ribosomal translocation step during translation elongation. During this step, the ribosome changes from the pre-translocational (PRE) to the post-translocational (POST) state as the newly formed A-site-bound peptidyl-tRNA and P-site-bound deacylated tRNA move to the P and E sites, respectively. Catalyzes the coordinated movement of the two tRNA molecules, the mRNA and conformational changes in the ribosome. This chain is Elongation factor G, found in Bacillus cereus (strain ZK / E33L).